The sequence spans 412 residues: Peptidase T (412 aa).

His84 is a Zn(2+) binding site. Asp86 is a catalytic residue. Asp146 is a binding site for Zn(2+). The Proton acceptor role is filled by Glu179. Positions 180, 202, and 385 each coordinate Zn(2+).

This sequence belongs to the peptidase M20B family. The cofactor is Zn(2+).

It is found in the cytoplasm. The catalysed reaction is Release of the N-terminal residue from a tripeptide.. Functionally, cleaves the N-terminal amino acid of tripeptides. This is Peptidase T from Haemophilus influenzae (strain 86-028NP).